A 36-amino-acid polypeptide reads, in one-letter code: Peptide POLARIS (36 aa).

It belongs to the POLARIS peptide family. In terms of tissue distribution, mostly expressed in the embryonic root from the heart stage and in the seedling primary and lateral root tips, especially in the columella initials and lateral root cap. Also detectable in aerial parts of the seedling, sepals and leaves, principally in vascular tissues of the lamina and petiole.

Functionally, required for correct root growth and vascular development, probably by modulating both cell division rate in meristems and cell elongation in roots. Negative regulator of the ethylene signaling pathway that modulates microtubule cytoskeleton dynamics and auxin transport and homeostasis, and possibly cytokinin signaling, thus influencing root growth and lateral root development. In Arabidopsis thaliana (Mouse-ear cress), this protein is Peptide POLARIS (PLS).